The following is a 156-amino-acid chain: Aspartate carbamoyltransferase regulatory chain (156 aa).

Zn(2+)-binding residues include cysteine 109, cysteine 114, cysteine 138, and cysteine 141.

It belongs to the PyrI family. In terms of assembly, contains catalytic and regulatory chains. It depends on Zn(2+) as a cofactor.

Its function is as follows. Involved in allosteric regulation of aspartate carbamoyltransferase. The polypeptide is Aspartate carbamoyltransferase regulatory chain (Baumannia cicadellinicola subsp. Homalodisca coagulata).